The following is a 428-amino-acid chain: 3-phosphoshikimate 1-carboxyvinyltransferase (428 aa).

Positions 23, 24, and 28 each coordinate 3-phosphoshikimate. Residue Lys23 participates in phosphoenolpyruvate binding. Residues Gly97 and Arg125 each contribute to the phosphoenolpyruvate site. 3-phosphoshikimate-binding residues include Ser170, Ser171, Gln172, Ser198, Asp314, Asn337, and Lys341. Gln172 serves as a coordination point for phosphoenolpyruvate. Residue Asp314 is the Proton acceptor of the active site. Phosphoenolpyruvate-binding residues include Arg345, Arg387, and Lys412.

The protein belongs to the EPSP synthase family. Monomer.

Its subcellular location is the cytoplasm. The enzyme catalyses 3-phosphoshikimate + phosphoenolpyruvate = 5-O-(1-carboxyvinyl)-3-phosphoshikimate + phosphate. It functions in the pathway metabolic intermediate biosynthesis; chorismate biosynthesis; chorismate from D-erythrose 4-phosphate and phosphoenolpyruvate: step 6/7. Catalyzes the transfer of the enolpyruvyl moiety of phosphoenolpyruvate (PEP) to the 5-hydroxyl of shikimate-3-phosphate (S3P) to produce enolpyruvyl shikimate-3-phosphate and inorganic phosphate. The sequence is that of 3-phosphoshikimate 1-carboxyvinyltransferase from Serratia proteamaculans (strain 568).